Here is a 29-residue protein sequence, read N- to C-terminus: Dermaseptin-9TR (29 aa).

In terms of tissue distribution, expressed by the skin glands.

Its subcellular location is the secreted. Has antimicrobial activity. The protein is Dermaseptin-9TR of Phyllomedusa trinitatis (Trinidad leaf frog).